Here is a 287-residue protein sequence, read N- to C-terminus: MVCFSSLFVAASAIAVVFASPVDHEQLAKRQSTPSSQGTHDGYFYSWWTDGGAAATYTNLAGGEYSVSWSNGGNLVGGKGWNPGSARTITYSGTYNPNGNSYLAVYGWTRNPLVEYYVVENFGTYNPSSGATARGQVTHDGALYRLFESTRTNQPSIDGTATFQQYWAVRDVKRTGGTVNMATFFNAWTSAGMRLGTHNYQVVATEGYFSSGSARINVAGGGGSTPSPPSTPSPPTTPSPPPVTPPPSGGGSCAARWGQCGGSGWNGATCCSAGTCQAQNQWYSQCL.

Residues 1 to 19 (MVCFSSLFVAASAIAVVFA) form the signal peptide. Positions 31–219 (QSTPSSQGTH…SSGSARINVA (189 aa)) constitute a GH11 domain. Catalysis depends on glutamate 115, which acts as the Nucleophile. Glutamate 206 acts as the Proton donor in catalysis. The region spanning 252 to 287 (SCAARWGQCGGSGWNGATCCSAGTCQAQNQWYSQCL) is the CBM1 domain.

The protein belongs to the glycosyl hydrolase 11 (cellulase G) family.

The enzyme catalyses Endohydrolysis of (1-&gt;4)-beta-D-xylosidic linkages in xylans.. Its pathway is glycan degradation; xylan degradation. Its function is as follows. Endo-1,4-beta-xylanase involved in the hydrolysis of xylan, a major structural heterogeneous polysaccharide found in plant biomass representing the second most abundant polysaccharide in the biosphere, after cellulose. Exhibits immunity-inducing activity and induces cell death in Nicotiana benthamiana. The sequence is that of Ethylene-inducing xylanase 3 from Verticillium longisporum (Verticillium dahliae var. longisporum).